The following is a 617-amino-acid chain: Proline--tRNA ligase (617 aa).

Belongs to the class-II aminoacyl-tRNA synthetase family. ProS type 1 subfamily. As to quaternary structure, homodimer.

It localises to the cytoplasm. The catalysed reaction is tRNA(Pro) + L-proline + ATP = L-prolyl-tRNA(Pro) + AMP + diphosphate. Its function is as follows. Catalyzes the attachment of proline to tRNA(Pro) in a two-step reaction: proline is first activated by ATP to form Pro-AMP and then transferred to the acceptor end of tRNA(Pro). As ProRS can inadvertently accommodate and process non-cognate amino acids such as alanine and cysteine, to avoid such errors it has two additional distinct editing activities against alanine. One activity is designated as 'pretransfer' editing and involves the tRNA(Pro)-independent hydrolysis of activated Ala-AMP. The other activity is designated 'posttransfer' editing and involves deacylation of mischarged Ala-tRNA(Pro). The misacylated Cys-tRNA(Pro) is not edited by ProRS. The polypeptide is Proline--tRNA ligase (Streptococcus pneumoniae serotype 4 (strain ATCC BAA-334 / TIGR4)).